A 96-amino-acid chain; its full sequence is UPF0213 protein BCE_0033 (96 aa).

The GIY-YIG domain occupies 4–79; that stretch reads NKHCFYVVEC…KQLNRKQKEE (76 aa).

The protein belongs to the UPF0213 family.

This is UPF0213 protein BCE_0033 from Bacillus cereus (strain ATCC 10987 / NRS 248).